The chain runs to 143 residues: MSEGFDGTENGGGGGGGGVGKEQDRFLPIANIGRIMRRAVPENGKIAKDSKESVQECVSEFISFITSEASDKCLKEKRKTINGDDLIWSMGTLGFEDYVEPLKLYLRLYRETEGDTKGSRASELPVKKDVVLNGDPGSSFEGM.

The interval M1–Q23 is disordered. Gly residues predominate over residues E9–G20. A DNA-binding region spans residues L27 to G33. Residues V54 to I65 are subunit association domain (SAD). Residues K117 to V130 show a composition bias toward basic and acidic residues. Positions K117 to M143 are disordered.

The protein belongs to the NFYB/HAP3 subunit family. As to quaternary structure, heterotrimeric transcription factor composed of three components, NF-YA, NF-YB and NF-YC. NF-YB and NF-YC must interact and dimerize for NF-YA association and DNA binding. Ubiquitous.

It localises to the nucleus. In terms of biological role, component of the NF-Y/HAP transcription factor complex. The NF-Y complex stimulates the transcription of various genes by recognizing and binding to a CCAAT motif in promoters. May regulate the expression of photosynthetic genes, and may be involved in chloroplast and amyloplast development. The sequence is that of Nuclear transcription factor Y subunit B-4 (NFYB4) from Oryza sativa subsp. japonica (Rice).